A 340-amino-acid polypeptide reads, in one-letter code: HTH-type transcriptional regulator CelR (340 aa).

The HTH lacI-type domain maps to 1-61 (MERRRRPTLE…PNRAARTLVT (61 aa)). Residues 9-28 (LEMVAALAGVGRGTVSRVIN) constitute a DNA-binding region (H-T-H motif).

Its subcellular location is the cytoplasm. With respect to regulation, activity is controlled by cytoplasmic cellobiose levels. Binding of CelR to the celE promoter is inhibited specifically by low concentrations of cellobiose, the major end product of cellulases. Activity may also be regulated through post-translational modification. Transcriptional regulator that regulates the expression of all six cellulases, encoded by the cel genes (designated celA through celF). Acts as a repressor. Specifically binds to a 14-bp inverted repeat site, which is present in the upstream region of the cellulase genes. This is HTH-type transcriptional regulator CelR from Thermobifida fusca (Thermomonospora fusca).